We begin with the raw amino-acid sequence, 264 residues long: MKAVVLAVAVLFLTGSQARHFWQQDEPQSPWDRVKDFATVYVDAVKDSGREYVSQFETSALGKQLNLNLLENWDTFGSTFGRLQEQLGPVTREFWDSLEKDTDWLRQEMNKDLEEVKQKVQPYLDEFQKKWEEEVERYRPKVEPLGAQLREGARQKLEELQKQLVPLGEDLRDRARLHVDALRTKLAPYSDQMRDRLAERLTALRDNPKLAEYHARATEHLKKLGEKTKPTLEDLRQGLMPWLESLKAKALSVLDEATQKLNTQ.

The signal sequence occupies residues 1–18 (MKAVVLAVAVLFLTGSQA). A run of 2 repeats spans residues 67–88 (LNLL…EQLG) and 89–110 (PVTR…QEMN). The tract at residues 67–264 (LNLLENWDTF…DEATQKLNTQ (198 aa)) is 10 X approximate tandem repeats. The residue at position 109 (Met109) is a Methionine sulfoxide. The stretch at 111–121 (KDLEEVKQKVQ) is one 3; half-length repeat. 3 consecutive repeat copies span residues 122–143 (PYLD…PKVE), 144–165 (PLGA…KQLV), and 166–187 (PLGE…TKLA). The stretch at 188–207 (PYSDQMRDRLAERLTALRDN) is one 7; truncated repeat. The residue at position 193 (Met193) is a Methionine sulfoxide. Repeat 8 spans residues 208 to 229 (PKLAEYHARATEHLKKLGEKTK). A 9; half-length repeat occupies 230–240 (PTLEDLRQGLM). Met240 bears the Methionine sulfoxide mark. Repeat unit 10 spans residues 241-264 (PWLESLKAKALSVLDEATQKLNTQ).

Belongs to the apolipoprotein A1/A4/E family. Homodimer. Interacts with APOA1BP and CLU. Component of a sperm activating protein complex (SPAP), consisting of APOA1, an immunoglobulin heavy chain, an immunoglobulin light chain and albumin. Interacts with NDRG1. Interacts with SCGB3A2. Interacts with NAXE and YJEFN3. In terms of processing, glycosylated. Palmitoylated. Post-translationally, phosphorylation sites are present in the extracellular medium.

Its subcellular location is the secreted. Functionally, participates in the reverse transport of cholesterol from tissues to the liver for excretion by promoting cholesterol efflux from tissues and by acting as a cofactor for the lecithin cholesterol acyltransferase (LCAT). As part of the SPAP complex, activates spermatozoa motility. The chain is Apolipoprotein A-I (Apoa1) from Nannospalax galili (Northern Israeli blind subterranean mole rat).